Consider the following 116-residue polypeptide: MSNHKLIEAVTQSQLRTDLPSFRPGDTLKVHVRIIEGTRERIQVFEGVVIKRRGGGISETFTVRKISSGVGVERTFPLHTPKIEKIEVSRRGKVRRAKLYYLRELRGKAARIKEIR.

This sequence belongs to the bacterial ribosomal protein bL19 family.

This protein is located at the 30S-50S ribosomal subunit interface and may play a role in the structure and function of the aminoacyl-tRNA binding site. The sequence is that of Large ribosomal subunit protein bL19 from Staphylococcus saprophyticus subsp. saprophyticus (strain ATCC 15305 / DSM 20229 / NCIMB 8711 / NCTC 7292 / S-41).